A 183-amino-acid polypeptide reads, in one-letter code: MDIDPYKEFGASTELISFLPADFFPSVRDLLDTAAALYREALESPEHCSHHHTALRQAILCWGELMTLATWVGNNLQDPASRDLVVNYVNTNMGLKIRQLLWFHISCLTFGRETVLEYLVSFGVWIRTPPAYRPPNAPILSTLPETTVVRRRGRSPRRRTPSPRRRRSQSPRRRRSQSRESQC.

Residues 136 to 183 (NAPILSTLPETTVVRRRGRSPRRRTPSPRRRRSQSPRRRRSQSRESQC) form a disordered region. Over residues 149–176 (VRRRGRSPRRRTPSPRRRRSQSPRRRRS) the composition is skewed to basic residues. 3 positions are modified to phosphoserine; by host: serine 155, serine 162, and serine 170. One copy of the 1; half-length repeat lies at 155–161 (SPRRRTP). The interval 155–177 (SPRRRTPSPRRRRSQSPRRRRSQ) is 3 X 8 AA repeats of S-P-R-R-R-[PR]-S-Q. The Bipartite nuclear localization signal motif lies at 158–175 (RRTPSPRRRRSQSPRRRR). A run of 2 repeats spans residues 162–169 (SPRRRRSQ) and 170–177 (SPRRRRSQ). The tract at residues 177-183 (QSRESQC) is RNA binding.

The protein belongs to the orthohepadnavirus core antigen family. As to quaternary structure, homodimerizes, then multimerizes. Interacts with cytosol exposed regions of viral L glycoprotein present in the reticulum-to-Golgi compartment. Interacts with human FLNB. Phosphorylated form interacts with host importin alpha; this interaction depends on the exposure of the NLS, which itself depends upon genome maturation and/or phosphorylation of the capsid protein. Interacts with host NUP153. In terms of processing, phosphorylated by host SRPK1, SRPK2, and maybe protein kinase C or GAPDH. Phosphorylation is critical for pregenomic RNA packaging. Protein kinase C phosphorylation is stimulated by HBx protein and may play a role in transport of the viral genome to the nucleus at the late step during the viral replication cycle.

It is found in the virion. Its subcellular location is the host cytoplasm. In terms of biological role, self assembles to form an icosahedral capsid. Most capsids appear to be large particles with an icosahedral symmetry of T=4 and consist of 240 copies of capsid protein, though a fraction forms smaller T=3 particles consisting of 180 capsid proteins. Entering capsids are transported along microtubules to the nucleus. Phosphorylation of the capsid is thought to induce exposure of nuclear localization signal in the C-terminal portion of the capsid protein that allows binding to the nuclear pore complex via the importin (karyopherin-) alpha and beta. Capsids are imported in intact form through the nuclear pore into the nuclear basket, where it probably binds NUP153. Only capsids that contain the mature viral genome can release the viral DNA and capsid protein into the nucleoplasm. Immature capsids get stuck in the basket. Capsids encapsulate the pre-genomic RNA and the P protein. Pre-genomic RNA is reverse-transcribed into DNA while the capsid is still in the cytoplasm. The capsid can then either be directed to the nucleus, providing more genomes for transcription, or bud through the endoplasmic reticulum to provide new virions. The chain is Capsid protein from Homo sapiens (Human).